We begin with the raw amino-acid sequence, 132 residues long: Glycerol-3-phosphate cytidylyltransferase (132 aa).

CTP-binding positions include 9-10 (TY) and 14-17 (HYGH). Lys44 is a binding site for substrate. CTP is bound at residue Lys46. Residue Lys77 coordinates substrate. 113–120 (RTEGISTT) lines the CTP pocket.

It belongs to the cytidylyltransferase family. Homotetramer or homodimer.

Its subcellular location is the cytoplasm. It catalyses the reaction sn-glycerol 3-phosphate + CTP + H(+) = CDP-glycerol + diphosphate. It functions in the pathway cell wall biogenesis; poly(ribitol phosphate) teichoic acid biosynthesis. Its function is as follows. Catalyzes the transfer of the cytidylyl group of CTP to sn-glycerol 3-phosphate so the activated glycerol 3-phosphate can be used for teichoic acid synthesis, via incorporation into both the linkage unit by TarB and TarF. This chain is Glycerol-3-phosphate cytidylyltransferase, found in Staphylococcus aureus (strain NCTC 8325 / PS 47).